The chain runs to 358 residues: Alternative oxidase, mitochondrial (358 aa).

A helical transmembrane segment spans residues 152–172 (LIRYVFLESVAGVPGMVAGML). Fe cation contacts are provided by glutamate 159, glutamate 198, and histidine 201. Residues 218 to 238 (MILGAQGVFFNSFFLCYLFSP) traverse the membrane as a helical segment. Fe cation-binding residues include glutamate 249, glutamate 306, and histidine 309.

This sequence belongs to the alternative oxidase family. Requires Fe cation as cofactor.

It localises to the mitochondrion inner membrane. In terms of biological role, catalyzes cyanide-resistant oxygen consumption. May increase respiration when the cytochrome respiratory pathway is restricted, or in response to low temperatures. The polypeptide is Alternative oxidase, mitochondrial (AOX1) (Monilinia fructicola (Brown rot fungus)).